The sequence spans 204 residues: UPF0637 protein SAB0972c (204 aa).

This sequence belongs to the UPF0637 family.

The sequence is that of UPF0637 protein SAB0972c from Staphylococcus aureus (strain bovine RF122 / ET3-1).